Consider the following 330-residue polypeptide: Putative 1-aminocyclopropane-1-carboxylate deaminase (330 aa).

At K54 the chain carries N6-(pyridoxal phosphate)lysine.

The protein belongs to the ACC deaminase/D-cysteine desulfhydrase family. It depends on pyridoxal 5'-phosphate as a cofactor.

It catalyses the reaction 1-aminocyclopropane-1-carboxylate + H2O = 2-oxobutanoate + NH4(+). The chain is Putative 1-aminocyclopropane-1-carboxylate deaminase from Pyrococcus abyssi (strain GE5 / Orsay).